Here is a 113-residue protein sequence, read N- to C-terminus: Small ribosomal subunit protein bS16 (113 aa).

Positions 84–113 are disordered; the sequence is PKPAYTEQPKKSAPKKRAQERAAAAAAAAA.

Belongs to the bacterial ribosomal protein bS16 family.

This chain is Small ribosomal subunit protein bS16, found in Gluconacetobacter diazotrophicus (strain ATCC 49037 / DSM 5601 / CCUG 37298 / CIP 103539 / LMG 7603 / PAl5).